A 643-amino-acid chain; its full sequence is Pesticidal crystal protein Cry11Aa (643 aa).

It belongs to the delta endotoxin family.

Its function is as follows. Promotes colloidosmotic lysis by binding to the midgut epithelial cells of mosquitos. The sequence is that of Pesticidal crystal protein Cry11Aa (cry11Aa) from Bacillus thuringiensis subsp. israelensis.